A 618-amino-acid polypeptide reads, in one-letter code: Sphingomyelin phosphodiesterase 2 (618 aa).

Residues methionine 1–serine 22 form the signal peptide. Positions arginine 68–aspartate 151 constitute a Saposin B-type domain. 3 disulfide bridges follow: cysteine 72-cysteine 147, cysteine 75-cysteine 140, and cysteine 103-cysteine 114. An N-linked (GlcNAc...) asparagine glycan is attached at asparagine 89. An N-linked (GlcNAc...) asparagine glycan is attached at asparagine 159. Zn(2+) contacts are provided by aspartate 189 and histidine 191. Disulfide bonds link cysteine 204/cysteine 216 and cysteine 217/cysteine 249. Aspartate 278 is a binding site for Zn(2+). N-linked (GlcNAc...) asparagine glycosylation occurs at asparagine 298. Residues asparagine 318, histidine 427, histidine 461, and histidine 463 each coordinate Zn(2+). A disulfide bond links cysteine 387 and cysteine 435. 2 N-linked (GlcNAc...) asparagine glycosylation sites follow: asparagine 525 and asparagine 568. 2 disulfide bridges follow: cysteine 588/cysteine 594 and cysteine 600/cysteine 613.

Belongs to the acid sphingomyelinase family. Zn(2+) serves as cofactor.

It is found in the secreted. The catalysed reaction is a sphingomyelin + H2O = phosphocholine + an N-acylsphing-4-enine + H(+). It catalyses the reaction an N-acyl-15-methylhexadecasphing-4-enine-1-phosphocholine + H2O = an N-acyl-15-methylhexadecasphing-4-enine + phosphocholine + H(+). It participates in lipid metabolism; sphingolipid metabolism. Sphingomyelin phosphodiesterase (sphingomyelinase) that converts sphingomyelin (N-acyl-sphingoid-1-phosphocholine) to ceramide (N-acyl-sphingoid base) and phosphocholine at acidic pH. Displays its enzymatic activity when secreted. May play distinct roles in signaling. This chain is Sphingomyelin phosphodiesterase 2 (asm-2), found in Caenorhabditis elegans.